A 177-amino-acid polypeptide reads, in one-letter code: ATP synthase subunit delta (177 aa).

The protein belongs to the ATPase delta chain family. F-type ATPases have 2 components, F(1) - the catalytic core - and F(0) - the membrane proton channel. F(1) has five subunits: alpha(3), beta(3), gamma(1), delta(1), epsilon(1). F(0) has three main subunits: a(1), b(2) and c(10-14). The alpha and beta chains form an alternating ring which encloses part of the gamma chain. F(1) is attached to F(0) by a central stalk formed by the gamma and epsilon chains, while a peripheral stalk is formed by the delta and b chains.

It is found in the cell inner membrane. Its function is as follows. F(1)F(0) ATP synthase produces ATP from ADP in the presence of a proton or sodium gradient. F-type ATPases consist of two structural domains, F(1) containing the extramembraneous catalytic core and F(0) containing the membrane proton channel, linked together by a central stalk and a peripheral stalk. During catalysis, ATP synthesis in the catalytic domain of F(1) is coupled via a rotary mechanism of the central stalk subunits to proton translocation. Functionally, this protein is part of the stalk that links CF(0) to CF(1). It either transmits conformational changes from CF(0) to CF(1) or is implicated in proton conduction. This Shewanella pealeana (strain ATCC 700345 / ANG-SQ1) protein is ATP synthase subunit delta.